The primary structure comprises 793 residues: MLMLMLVAAVTMWLRPLVTAQPLCRARTVRTGKVFNVIQDVQGDRLYFRSTTTRLIKHPCKKNIALYLGKQVFFTTDNFETSLLPFTIPTSMQVGVPEVTSAHFTGSLLLLVVNHKVYTYDYESNSWNLSLGIKHPVTHVSGDNCCYTGSLFCVDVSNLVFAYFRGDQISQTYIYYSNTGGFSFWKYHYDRQAEIVGSLGGIFHLFSLSQVGMLVVDQGKGMFKYSDHPLNRSLGLSFDYNGTLDIVIAPGQKGILLLWFEKSLLFSRNAGQLVDTVRVKKGEQTLFTSIFEAQITIHNIAVNENELAVITREDNLYYGNLGIVPSSIIKFAHQHIWSEDAALMFRSSGILEILTPVRDTAFAAFDFQKCLLNIQAILMDPDLHVGRCNIEFLKGEFTYRMYTIDMHSQLELTALLIPQPGTSLIPLVMVSNPHSLGFQATFYESGYTSDGNTKYKLDIYLKQQQHWGRTDFNFTSSLKRATMSTLTVDIANKEISCVDIKPLSTLISVGCDLDKKIVIQNTVSACSKGVLDALALQDNYSFIIEKEFYDPGFQGRQSSKDLHVFYSYQQLGCPLLVYYDTPWKPVVELWKKDRFQEVVDAEYVLLEVNGQFSYSYSLTAKSAMCTSQPQNWTTMIKESGGPFFWNRENYVSCHDPNNDAPLRWPDVQYQILGGRTANQIVFSHNNGFYVFYISIVDPYYSYCQLETVFSIYVYGAFPVQLVSAGVVMVLLISSILGSVWLAYMIPRLLRTARGRRMTSFVAQLYGRCKTVCQFRASATARTGSKPMGRHRSS.

An N-terminal signal peptide occupies residues 1 to 20 (MLMLMLVAAVTMWLRPLVTA). At 21–725 (QPLCRARTVR…AFPVQLVSAG (705 aa)) the chain is on the extracellular side. 7 disulfides stabilise this stretch: Cys24–Cys370, Cys60–Cys146, Cys145–Cys153, Cys388–Cys497, Cys511–Cys703, Cys526–Cys573, and Cys625–Cys653. N-linked (GlcNAc...) asparagine glycosylation occurs at Asn128. N-linked (GlcNAc...) asparagine glycans are attached at residues Asn231, Asn241, Asn473, Asn539, and Asn631. The chain crosses the membrane as a helical span at residues 726 to 747 (VVMVLLISSILGSVWLAYMIPR). The Cytoplasmic portion of the chain corresponds to 748–793 (LLRTARGRRMTSFVAQLYGRCKTVCQFRASATARTGSKPMGRHRSS).

This sequence belongs to the CATSPERD family. In terms of assembly, component of the CatSper complex or CatSpermasome composed of the core pore-forming members CATSPER1, CATSPER2, CATSPER3 and CATSPER4 as well as auxiliary members CATSPERB, CATSPERG, CATSPERD, CATSPERE, CATSPERZ, C2CD6/CATSPERT, TMEM249, TMEM262 and EFCAB9. HSPA1 may be an additional auxiliary complex member. The core complex members CATSPER1, CATSPER2, CATSPER3 and CATSPER4 form a heterotetrameric channel. The auxiliary CATSPERB, CATSPERG, CATSPERD and CATSPERE subunits form a pavilion-like structure over the pore which stabilizes the complex through interactions with CATSPER4, CATSPER3, CATSPER1 and CATSPER2 respectively. TMEM262/CATSPERH interacts with CATSPERB, further stabilizing the complex. C2CD6/CATSPERT interacts at least with CATSPERD and is required for targeting the CatSper complex in the flagellar membrane.

The protein resides in the cell projection. It localises to the cilium. It is found in the flagellum membrane. Functionally, auxiliary component of the CatSper complex, a complex involved in sperm cell hyperactivation. Sperm cell hyperactivation is needed for sperm motility which is essential late in the preparation of sperm for fertilization. Required for CATSPER1 stability before intraflagellar transport and/or incorporation of the CatSper complex channel into the flagellar membrane. This is Cation channel sperm-associated auxiliary subunit delta from Macaca fascicularis (Crab-eating macaque).